Here is a 1374-residue protein sequence, read N- to C-terminus: Sterol 3-beta-glucosyltransferase (1374 aa).

A compositionally biased stretch (basic and acidic residues) spans 1–14; sequence MRPLRDDAKRRADR. Disordered regions lie at residues 1 to 60, 83 to 190, and 206 to 227; these read MRPL…RDGN, ARFD…PRAA, and TSAT…QPQS. Polar residues predominate over residues 16–28; that stretch reads LSASMKPTSSNRP. Basic and acidic residues predominate over residues 29 to 41; the sequence is FSDRVPDRFKDGD. Residues 101–112 are compositionally biased toward polar residues; that stretch reads VEQTTGKASSRT. The segment covering 125–138 has biased composition (basic and acidic residues); that stretch reads KRSEPSKLVLEERG. In terms of domain architecture, GRAM 1 spans 234 to 283; sequence MRLMKMFEFAKPEKVLVEYACSLLQSMLLQGYMYVTEGHICFYAYLPKKS. Residues 285–382 form the PH domain; sequence VAIKSGYLSK…WVKALQQVIF (98 aa). The segment at 458-538 is disordered; it reads ATKEAQDQHD…SMTDTTESAS (81 aa). Composition is skewed to basic and acidic residues over residues 461–473 and 490–499; these read EAQD…HQPE and SDQRREDSPR. A compositionally biased stretch (polar residues) spans 503-538; it reads SSVGNENQGSADSFAEQGTGSSPIIQSMTDTTESAS. Residues 704–770 enclose the GRAM 2 domain; sequence DRFRAHFALP…KDIENVEKEK (67 aa). Residues Ser-893, Arg-894, Asp-896, Ala-1196, His-1198, His-1211, Gly-1215, Thr-1216, Asp-1235, and Gln-1236 each coordinate UDP-alpha-D-glucose. A compositionally biased stretch (polar residues) spans 1314-1325; that stretch reads ASSTPFSPTPTA. A disordered region spans residues 1314-1338; that stretch reads ASSTPFSPTPTAKASPDGGDDDLDD.

This sequence belongs to the glycosyltransferase 28 family.

It is found in the cytoplasm. Its subcellular location is the preautophagosomal structure membrane. The catalysed reaction is a sterol + UDP-alpha-D-glucose = a sterol 3-beta-D-glucoside + UDP + H(+). The enzyme catalyses ergosterol + UDP-alpha-D-glucose = ergosteryl 3-beta-D-glucoside + UDP + H(+). Functionally, sterol glycosyltransferase responsible for the glycosylation of ergosterol to form ergosterol-glucoside. This chain is Sterol 3-beta-glucosyltransferase, found in Penicillium rubens (strain ATCC 28089 / DSM 1075 / NRRL 1951 / Wisconsin 54-1255) (Penicillium chrysogenum).